The chain runs to 339 residues: RNA 3'-terminal phosphate cyclase (339 aa).

ATP is bound by residues Gln103 and 283–287 (HLADQ). The active-site Tele-AMP-histidine intermediate is His308.

This sequence belongs to the RNA 3'-terminal cyclase family. Type 1 subfamily.

Its subcellular location is the cytoplasm. It carries out the reaction a 3'-end 3'-phospho-ribonucleotide-RNA + ATP = a 3'-end 2',3'-cyclophospho-ribonucleotide-RNA + AMP + diphosphate. Catalyzes the conversion of 3'-phosphate to a 2',3'-cyclic phosphodiester at the end of RNA. The mechanism of action of the enzyme occurs in 3 steps: (A) adenylation of the enzyme by ATP; (B) transfer of adenylate to an RNA-N3'P to produce RNA-N3'PP5'A; (C) and attack of the adjacent 2'-hydroxyl on the 3'-phosphorus in the diester linkage to produce the cyclic end product. The biological role of this enzyme is unknown but it is likely to function in some aspects of cellular RNA processing. The protein is RNA 3'-terminal phosphate cyclase of Salmonella typhimurium (strain LT2 / SGSC1412 / ATCC 700720).